We begin with the raw amino-acid sequence, 189 residues long: uncharacterized protein (189 aa).

It belongs to the flavoredoxin family. FMN is required as a cofactor.

This is an uncharacterized protein from Escherichia coli (strain K12).